The chain runs to 210 residues: MADS-box protein AeAP3-2 (210 aa).

One can recognise an MADS-box domain in the interval 1 to 36 (GGLLKKARELAILCDAQLGVIIFSSSGKMFEFSSPP). The K-box domain maps to 59–149 (NQQVYCEITR…YRVIQDHHAA (91 aa)).

As to expression, expressed exclusively in the carpel.

It is found in the nucleus. Functionally, probable transcription factor. In Asarum europaeum (Asarabacca), this protein is MADS-box protein AeAP3-2 (AP3-2).